Reading from the N-terminus, the 199-residue chain is Photosystem II D1 precursor processing protein PSB27-H2, chloroplastic (199 aa).

This sequence belongs to the Psb27 family. As to quaternary structure, interacts with the C-terminus of both the precursor and mature form of D1.

The protein localises to the plastid. The protein resides in the chloroplast thylakoid lumen. In terms of biological role, required, but not essential, for D1 (psbA) precursor processing and thus correct photosystem II assembly (PSII). In Arabidopsis thaliana (Mouse-ear cress), this protein is Photosystem II D1 precursor processing protein PSB27-H2, chloroplastic (PSB27-2).